The sequence spans 280 residues: Bifunctional protein FolD (280 aa).

Residues 166 to 168 and Ser191 each bind NADP(+); that span reads GRS.

It belongs to the tetrahydrofolate dehydrogenase/cyclohydrolase family. Homodimer.

It catalyses the reaction (6R)-5,10-methylene-5,6,7,8-tetrahydrofolate + NADP(+) = (6R)-5,10-methenyltetrahydrofolate + NADPH. It carries out the reaction (6R)-5,10-methenyltetrahydrofolate + H2O = (6R)-10-formyltetrahydrofolate + H(+). It participates in one-carbon metabolism; tetrahydrofolate interconversion. Catalyzes the oxidation of 5,10-methylenetetrahydrofolate to 5,10-methenyltetrahydrofolate and then the hydrolysis of 5,10-methenyltetrahydrofolate to 10-formyltetrahydrofolate. The sequence is that of Bifunctional protein FolD from Teredinibacter turnerae (strain ATCC 39867 / T7901).